Consider the following 336-residue polypeptide: Biotin synthase (336 aa).

In terms of domain architecture, Radical SAM core spans 54-281; that stretch reads NAIQLSTLLS…KAMVRLSAGR (228 aa). Residues Cys69, Cys73, and Cys76 each contribute to the [4Fe-4S] cluster site. The [2Fe-2S] cluster site is built by Cys113, Cys144, Cys204, and Arg276.

This sequence belongs to the radical SAM superfamily. Biotin synthase family. Homodimer. Requires [4Fe-4S] cluster as cofactor. [2Fe-2S] cluster serves as cofactor.

The enzyme catalyses (4R,5S)-dethiobiotin + (sulfur carrier)-SH + 2 reduced [2Fe-2S]-[ferredoxin] + 2 S-adenosyl-L-methionine = (sulfur carrier)-H + biotin + 2 5'-deoxyadenosine + 2 L-methionine + 2 oxidized [2Fe-2S]-[ferredoxin]. It participates in cofactor biosynthesis; biotin biosynthesis; biotin from 7,8-diaminononanoate: step 2/2. In terms of biological role, catalyzes the conversion of dethiobiotin (DTB) to biotin by the insertion of a sulfur atom into dethiobiotin via a radical-based mechanism. This chain is Biotin synthase, found in Burkholderia mallei (strain ATCC 23344).